Reading from the N-terminus, the 483-residue chain is Aspartyl/glutamyl-tRNA(Asn/Gln) amidotransferase subunit B (483 aa).

It belongs to the GatB/GatE family. GatB subfamily. In terms of assembly, heterotrimer of A, B and C subunits.

It catalyses the reaction L-glutamyl-tRNA(Gln) + L-glutamine + ATP + H2O = L-glutaminyl-tRNA(Gln) + L-glutamate + ADP + phosphate + H(+). The enzyme catalyses L-aspartyl-tRNA(Asn) + L-glutamine + ATP + H2O = L-asparaginyl-tRNA(Asn) + L-glutamate + ADP + phosphate + 2 H(+). Allows the formation of correctly charged Asn-tRNA(Asn) or Gln-tRNA(Gln) through the transamidation of misacylated Asp-tRNA(Asn) or Glu-tRNA(Gln) in organisms which lack either or both of asparaginyl-tRNA or glutaminyl-tRNA synthetases. The reaction takes place in the presence of glutamine and ATP through an activated phospho-Asp-tRNA(Asn) or phospho-Glu-tRNA(Gln). This is Aspartyl/glutamyl-tRNA(Asn/Gln) amidotransferase subunit B from Lachnospira eligens (strain ATCC 27750 / DSM 3376 / VPI C15-48 / C15-B4) (Eubacterium eligens).